The primary structure comprises 469 residues: UDP-N-acetylmuramate--L-alanine ligase (469 aa).

112-118 (GTHGKTT) is an ATP binding site.

The protein belongs to the MurCDEF family.

The protein resides in the cytoplasm. The enzyme catalyses UDP-N-acetyl-alpha-D-muramate + L-alanine + ATP = UDP-N-acetyl-alpha-D-muramoyl-L-alanine + ADP + phosphate + H(+). Its pathway is cell wall biogenesis; peptidoglycan biosynthesis. In terms of biological role, cell wall formation. This Laribacter hongkongensis (strain HLHK9) protein is UDP-N-acetylmuramate--L-alanine ligase.